The sequence spans 899 residues: Nuclear factor NF-kappa-B p100 subunit (899 aa).

Phosphoserine occurs at positions 23 and 161. One can recognise an RHD domain in the interval 35–224 (ADGPYLVIVE…QPIHDSKSPG (190 aa)). A Nuclear localization signal motif is present at residues 337–341 (RKRRK). The tract at residues 346 to 377 (FSQPFGGGSHMGGGSGGSAGGYGGAGGGGSLG) is GRR. Residues 403–434 (GGAQMAGSRRDTDAGEGAEEPRTPPEAPQGEP) are disordered. A compositionally biased stretch (basic and acidic residues) spans 410-425 (SRRDTDAGEGAEEPRT). T425 bears the Phosphothreonine mark. ANK repeat units follow at residues 487 to 516 (NGDT…HAQY), 526 to 555 (LHQT…DPTL), 559 to 590 (HGDS…HAVP), 599 to 628 (EGLY…EVEA), 633 to 663 (GGRT…NVNA), and 667 to 696 (AGNT…DIHA). Positions 698–734 (NEEPLCPLPSPSTSGSDSDSEGPERDTQRNFRGHTPL) are disordered. A phosphoserine mark is found at S713, S715, and S717. The ANK 7 repeat unit spans residues 729–755 (RGHTPLDLTCSTKVKTLLLNAAQNTTE). Positions 764 to 851 (AGPGLSLGDA…EGVRLLKGPE (88 aa)) constitute a Death domain. At S812 the chain carries Phosphoserine. A compositionally biased stretch (basic and acidic residues) spans 851–865 (ETRDKLPSTEVKEDS). Residues 851-899 (ETRDKLPSTEVKEDSAYGSQSVEQEAEKLCPPPEPPGGLCHGHPQPQVH) are disordered. K855 participates in a covalent cross-link: Glycyl lysine isopeptide (Lys-Gly) (interchain with G-Cter in ubiquitin). Residues S865 and S869 each carry the phosphoserine; by MAP3K14 modification. Positions 887-899 (GGLCHGHPQPQVH) are enriched in low complexity.

As to quaternary structure, component of the NF-kappa-B RelB-p52 complex. Homodimer; component of the NF-kappa-B p52-p52 complex. Component of the NF-kappa-B p65-p52 complex. Component of the NF-kappa-B p52-c-Rel complex. NFKB2/p52 interacts with NFKBIE. Component of a complex consisting of the NF-kappa-B p50-p50 homodimer and BCL3. Directly interacts with MEN1. Post-translationally, while translation occurs, the particular unfolded structure after the GRR repeat promotes the generation of p52 making it an acceptable substrate for the proteasome. This process is known as cotranslational processing. The processed form is active and the unprocessed form acts as an inhibitor (I kappa B-like), being able to form cytosolic complexes with NF-kappa B, trapping it in the cytoplasm. Complete folding of the region downstream of the GRR repeat precludes processing. In terms of processing, subsequent to MAP3K14-dependent serine phosphorylation, p100 polyubiquitination occurs then triggering its proteasome-dependent processing. Constitutive processing is tightly suppressed by its C-terminal processing inhibitory domain, named PID, which contains the death domain. Post-translationally, ubiquitinated by TRIM55; leading to processing by VCP and subsequent ubiquitin-dependent protein degradation by the proteasome. In terms of tissue distribution, highly expressed in lymph nodes and thymus.

Its subcellular location is the nucleus. It localises to the cytoplasm. Its function is as follows. NF-kappa-B is a pleiotropic transcription factor present in almost all cell types and is the endpoint of a series of signal transduction events that are initiated by a vast array of stimuli related to many biological processes such as inflammation, immunity, differentiation, cell growth, tumorigenesis and apoptosis. NF-kappa-B is a homo- or heterodimeric complex formed by the Rel-like domain-containing proteins RELA/p65, RELB, NFKB1/p105, NFKB1/p50, REL and NFKB2/p52. The dimers bind at kappa-B sites in the DNA of their target genes and the individual dimers have distinct preferences for different kappa-B sites that they can bind with distinguishable affinity and specificity. Different dimer combinations act as transcriptional activators or repressors, respectively. NF-kappa-B is controlled by various mechanisms of post-translational modification and subcellular compartmentalization as well as by interactions with other cofactors or corepressors. NF-kappa-B complexes are held in the cytoplasm in an inactive state complexed with members of the NF-kappa-B inhibitor (I-kappa-B) family. In a conventional activation pathway, I-kappa-B is phosphorylated by I-kappa-B kinases (IKKs) in response to different activators, subsequently degraded thus liberating the active NF-kappa-B complex which translocates to the nucleus. In a non-canonical activation pathway, the MAP3K14-activated CHUK/IKKA homodimer phosphorylates NFKB2/p100 associated with RelB, inducing its proteolytic processing to NFKB2/p52 and the formation of NF-kappa-B RelB-p52 complexes. The NF-kappa-B heterodimeric RelB-p52 complex is a transcriptional activator. The NF-kappa-B p52-p52 homodimer is a transcriptional repressor. NFKB2 appears to have dual functions such as cytoplasmic retention of attached NF-kappa-B proteins by p100 and generation of p52 by a cotranslational processing. The proteasome-mediated process ensures the production of both p52 and p100 and preserves their independent function. p52 binds to the kappa-B consensus sequence 5'-GGRNNYYCC-3', located in the enhancer region of genes involved in immune response and acute phase reactions. p52 and p100 are respectively the minor and major form; the processing of p100 being relatively poor. Isoform p49 is a subunit of the NF-kappa-B protein complex, which stimulates the HIV enhancer in synergy with p65. In concert with RELB, regulates the circadian clock by repressing the transcriptional activator activity of the CLOCK-BMAL1 heterodimer. This chain is Nuclear factor NF-kappa-B p100 subunit (Nfkb2), found in Mus musculus (Mouse).